The primary structure comprises 945 residues: Endo-1,4-beta-xylanase 1 (945 aa).

Residues N16–K41 are compositionally biased toward basic and acidic residues. The tract at residues N16–I50 is disordered. CBM-cenC domains follow at residues N57–S197, I227–P362, and N397–S541. 7 N-linked (GlcNAc...) asparagine glycosylation sites follow: N86, N239, N305, N349, N417, N453, and N687. The 296-residue stretch at S589–V884 folds into the GH10 domain. E718 serves as the catalytic Proton donor. E819 acts as the Nucleophile in catalysis.

The protein belongs to the glycosyl hydrolase 10 (cellulase F) family. Predominantly expressed in vascular bundles, but not in vessel cells. Mostly expressed in stems, at lower levels in roots, and weakly in inflorescences and seedlings.

The protein resides in the secreted. The protein localises to the cell wall. The catalysed reaction is Endohydrolysis of (1-&gt;4)-beta-D-xylosidic linkages in xylans.. The protein operates within glycan degradation; xylan degradation. Binds to and hydrolyzes insoluble and soluble xylan substrates. Exhibits xylanase activity. The chain is Endo-1,4-beta-xylanase 1 from Arabidopsis thaliana (Mouse-ear cress).